The primary structure comprises 737 residues: Polyribonucleotide nucleotidyltransferase (737 aa).

The Mg(2+) site is built by aspartate 514 and aspartate 520. The 60-residue stretch at 580–639 (PRIITVKIPVDKIGEVIGPKGKMINQIQEDTGADITIEDDGTIYIGAQAGSQAEAARATI) folds into the KH domain. Positions 651-723 (GERYLGTVVK…SRGKLSLIPV (73 aa)) constitute an S1 motif domain.

This sequence belongs to the polyribonucleotide nucleotidyltransferase family. Requires Mg(2+) as cofactor.

It localises to the cytoplasm. The catalysed reaction is RNA(n+1) + phosphate = RNA(n) + a ribonucleoside 5'-diphosphate. Involved in mRNA degradation. Catalyzes the phosphorolysis of single-stranded polyribonucleotides processively in the 3'- to 5'-direction. This chain is Polyribonucleotide nucleotidyltransferase, found in Streptomyces griseus subsp. griseus (strain JCM 4626 / CBS 651.72 / NBRC 13350 / KCC S-0626 / ISP 5235).